The following is a 201-amino-acid chain: FMN-dependent NADH:quinone oxidoreductase (201 aa).

FMN-binding positions include S10, 16-18 (SQS), 96-99 (MYNF), and 140-143 (SRGG).

The protein belongs to the azoreductase type 1 family. Homodimer. FMN is required as a cofactor.

The enzyme catalyses 2 a quinone + NADH + H(+) = 2 a 1,4-benzosemiquinone + NAD(+). It carries out the reaction N,N-dimethyl-1,4-phenylenediamine + anthranilate + 2 NAD(+) = 2-(4-dimethylaminophenyl)diazenylbenzoate + 2 NADH + 2 H(+). In terms of biological role, quinone reductase that provides resistance to thiol-specific stress caused by electrophilic quinones. Functionally, also exhibits azoreductase activity. Catalyzes the reductive cleavage of the azo bond in aromatic azo compounds to the corresponding amines. The polypeptide is FMN-dependent NADH:quinone oxidoreductase (Escherichia coli O6:H1 (strain CFT073 / ATCC 700928 / UPEC)).